An 87-amino-acid chain; its full sequence is Cell division topological specificity factor (87 aa).

It belongs to the MinE family.

In terms of biological role, prevents the cell division inhibition by proteins MinC and MinD at internal division sites while permitting inhibition at polar sites. This ensures cell division at the proper site by restricting the formation of a division septum at the midpoint of the long axis of the cell. The chain is Cell division topological specificity factor from Acidiphilium cryptum (strain JF-5).